The sequence spans 362 residues: Aminomethyltransferase (362 aa).

It belongs to the GcvT family. As to quaternary structure, the glycine cleavage system is composed of four proteins: P, T, L and H.

It carries out the reaction N(6)-[(R)-S(8)-aminomethyldihydrolipoyl]-L-lysyl-[protein] + (6S)-5,6,7,8-tetrahydrofolate = N(6)-[(R)-dihydrolipoyl]-L-lysyl-[protein] + (6R)-5,10-methylene-5,6,7,8-tetrahydrofolate + NH4(+). Functionally, the glycine cleavage system catalyzes the degradation of glycine. The sequence is that of Aminomethyltransferase from Colwellia psychrerythraea (strain 34H / ATCC BAA-681) (Vibrio psychroerythus).